The following is a 633-amino-acid chain: Carbon monoxide dehydrogenase 2 (633 aa).

5 residues coordinate [4Fe-4S] cluster: Cys-44, Cys-53, Cys-56, Cys-61, and Cys-73. [Ni-4Fe-5S] cluster is bound by residues His-264, Cys-343, Cys-453, Cys-484, and Cys-525.

The protein belongs to the Ni-containing carbon monoxide dehydrogenase family. As to quaternary structure, homodimer. [4Fe-4S] cluster serves as cofactor. [Ni-4Fe-5S] cluster is required as a cofactor.

The catalysed reaction is CO + 2 oxidized [2Fe-2S]-[ferredoxin] + H2O = 2 reduced [2Fe-2S]-[ferredoxin] + CO2 + 2 H(+). In terms of biological role, CODH oxidizes carbon monoxide coupled, via CooF, to the reduction of a hydrogen cation by a hydrogenase (possibly CooH). This is Carbon monoxide dehydrogenase 2 (cooS2) from Methanosarcina acetivorans (strain ATCC 35395 / DSM 2834 / JCM 12185 / C2A).